The chain runs to 159 residues: Cyclic pyranopterin monophosphate synthase (159 aa).

Residues 75 to 77 and 113 to 114 each bind substrate; these read LCH and ME. Residue D128 is part of the active site.

Belongs to the MoaC family. In terms of assembly, homohexamer; trimer of dimers.

The catalysed reaction is (8S)-3',8-cyclo-7,8-dihydroguanosine 5'-triphosphate = cyclic pyranopterin phosphate + diphosphate. It participates in cofactor biosynthesis; molybdopterin biosynthesis. Its function is as follows. Catalyzes the conversion of (8S)-3',8-cyclo-7,8-dihydroguanosine 5'-triphosphate to cyclic pyranopterin monophosphate (cPMP). The protein is Cyclic pyranopterin monophosphate synthase of Yersinia pseudotuberculosis serotype IB (strain PB1/+).